The primary structure comprises 44 residues: MRDLKTYLSVAPVLSTLWFGSLAGLLIEINRFFPDALTFPFFSF.

Residues 7–27 (YLSVAPVLSTLWFGSLAGLLI) form a helical membrane-spanning segment.

It belongs to the PsaJ family.

It localises to the plastid. It is found in the chloroplast thylakoid membrane. Functionally, may help in the organization of the PsaE and PsaF subunits. This chain is Photosystem I reaction center subunit IX, found in Lactuca sativa (Garden lettuce).